Here is a 1847-residue protein sequence, read N- to C-terminus: Replication factor C small subunit (1847 aa).

3 consecutive DOD-type homing endonuclease domains span residues W179–I311, M780–I927, and L1348–V1508.

The protein belongs to the activator 1 small subunits family. RfcS subfamily. As to quaternary structure, heteromultimer composed of small subunits (RfcS) and large subunits (RfcL). This protein undergoes a protein self splicing that involves a post-translational excision of the intervening region (intein) followed by peptide ligation.

Its function is as follows. Part of the RFC clamp loader complex which loads the PCNA sliding clamp onto DNA. This chain is Replication factor C small subunit (rfcS), found in Methanocaldococcus jannaschii (strain ATCC 43067 / DSM 2661 / JAL-1 / JCM 10045 / NBRC 100440) (Methanococcus jannaschii).